A 419-amino-acid chain; its full sequence is Oxamate carbamoyltransferase subunit AllG (419 aa).

The protein belongs to the AllG family. As to quaternary structure, the OXTCase is composed of 3 subunits, AllF, AllG and AllH. Mg(2+) is required as a cofactor.

It catalyses the reaction oxamate + carbamoyl phosphate = N-carbamoyl-2-oxoglycine + phosphate. Its pathway is nitrogen metabolism; (S)-allantoin degradation. Its function is as follows. Component of a carbamoyltransferase involved in the anaerobic nitrogen utilization via the assimilation of allantoin. Catalyzes the conversion of oxalurate (N-carbamoyl-2-oxoglycine) to oxamate and carbamoyl phosphate. This is Oxamate carbamoyltransferase subunit AllG from Escherichia coli (strain K12).